The sequence spans 270 residues: 3-methyl-2-oxobutanoate hydroxymethyltransferase (270 aa).

The Mg(2+) site is built by aspartate 41 and aspartate 80. 3-methyl-2-oxobutanoate-binding positions include 41–42 (DS), aspartate 80, and lysine 109. Glutamate 111 contacts Mg(2+). The active-site Proton acceptor is glutamate 178.

The protein belongs to the PanB family. As to quaternary structure, homodecamer; pentamer of dimers. Mg(2+) serves as cofactor.

It localises to the cytoplasm. It carries out the reaction 3-methyl-2-oxobutanoate + (6R)-5,10-methylene-5,6,7,8-tetrahydrofolate + H2O = 2-dehydropantoate + (6S)-5,6,7,8-tetrahydrofolate. It participates in cofactor biosynthesis; (R)-pantothenate biosynthesis; (R)-pantoate from 3-methyl-2-oxobutanoate: step 1/2. Functionally, catalyzes the reversible reaction in which hydroxymethyl group from 5,10-methylenetetrahydrofolate is transferred onto alpha-ketoisovalerate to form ketopantoate. The sequence is that of 3-methyl-2-oxobutanoate hydroxymethyltransferase from Thermotoga maritima (strain ATCC 43589 / DSM 3109 / JCM 10099 / NBRC 100826 / MSB8).